We begin with the raw amino-acid sequence, 320 residues long: Histidine decarboxylase proenzyme (320 aa).

A propeptide spanning residues 2 to 11 (NKNLEANRNR) is cleaved from the precursor. Serine 98 bears the Pyruvic acid (Ser) mark. Glutamate 215 functions as the Proton donor in the catalytic mechanism.

The proenzyme is a hexamer of identical pi chains; each pi chain monomer is cleaved to form a small (or beta) chain and a large (or alpha) chain by non-hydrolytic self-catalysis. Pyruvate serves as cofactor.

The catalysed reaction is L-histidine + H(+) = histamine + CO2. This Clostridium perfringens (strain ATCC 13124 / DSM 756 / JCM 1290 / NCIMB 6125 / NCTC 8237 / Type A) protein is Histidine decarboxylase proenzyme (hdc).